The primary structure comprises 339 residues: Ketol-acid reductoisomerase (NADP(+)) (339 aa).

The 182-residue stretch at 1–182 folds into the KARI N-terminal Rossmann domain; sequence MRVYYDRDAD…GGGRSGIIET (182 aa). NADP(+) contacts are provided by residues 24 to 27, arginine 48, serine 51, threonine 53, and 83 to 86; these read YGSQ and DELQ. Histidine 108 is a catalytic residue. Residue glycine 134 coordinates NADP(+). The 146-residue stretch at 183 to 328 folds into the KARI C-terminal knotted domain; the sequence is SFREECETDL…EKLRAMMPWI (146 aa). Mg(2+) is bound by residues aspartate 191, glutamate 195, glutamate 227, and glutamate 231. Serine 252 contributes to the substrate binding site.

This sequence belongs to the ketol-acid reductoisomerase family. Requires Mg(2+) as cofactor.

It catalyses the reaction (2R)-2,3-dihydroxy-3-methylbutanoate + NADP(+) = (2S)-2-acetolactate + NADPH + H(+). The enzyme catalyses (2R,3R)-2,3-dihydroxy-3-methylpentanoate + NADP(+) = (S)-2-ethyl-2-hydroxy-3-oxobutanoate + NADPH + H(+). It participates in amino-acid biosynthesis; L-isoleucine biosynthesis; L-isoleucine from 2-oxobutanoate: step 2/4. Its pathway is amino-acid biosynthesis; L-valine biosynthesis; L-valine from pyruvate: step 2/4. Functionally, involved in the biosynthesis of branched-chain amino acids (BCAA). Catalyzes an alkyl-migration followed by a ketol-acid reduction of (S)-2-acetolactate (S2AL) to yield (R)-2,3-dihydroxy-isovalerate. In the isomerase reaction, S2AL is rearranged via a Mg-dependent methyl migration to produce 3-hydroxy-3-methyl-2-ketobutyrate (HMKB). In the reductase reaction, this 2-ketoacid undergoes a metal-dependent reduction by NADPH to yield (R)-2,3-dihydroxy-isovalerate. The protein is Ketol-acid reductoisomerase (NADP(+)) of Paramagnetospirillum magneticum (strain ATCC 700264 / AMB-1) (Magnetospirillum magneticum).